Here is a 191-residue protein sequence, read N- to C-terminus: IMP cyclohydrolase (191 aa).

Belongs to the archaeal IMP cyclohydrolase family.

The enzyme catalyses IMP + H2O = 5-formamido-1-(5-phospho-D-ribosyl)imidazole-4-carboxamide. The protein operates within purine metabolism; IMP biosynthesis via de novo pathway; IMP from 5-formamido-1-(5-phospho-D-ribosyl)imidazole-4-carboxamide: step 1/1. In terms of biological role, catalyzes the cyclization of 5-formylamidoimidazole-4-carboxamide ribonucleotide to IMP. This chain is IMP cyclohydrolase, found in Natronomonas pharaonis (strain ATCC 35678 / DSM 2160 / CIP 103997 / JCM 8858 / NBRC 14720 / NCIMB 2260 / Gabara) (Halobacterium pharaonis).